The primary structure comprises 288 residues: MFNFAKTAVLMAAITALFIVVGGMLGGEQGMLMALLMAVGMNFFSYWFSDTMVLKMTNAQQVDERSAPQFYALVRELSEKAGLPMPKVFLIDEDAPNAFATGRNPDNASVAATIGVLKILSNRELRGVMAHELAHVRHRDILISAVAATMAGAISALANFAMFFGGRDSEGRPNNPIASLMVAILAPIAASLIQMSISRAREYEADRGGAEISSDPEALAHALEKIHNYAQGTPFQAVEQHPETAQMMILNPLTAGGLAQLFSTHPPTEERVARLMHMAKNGEYPGAN.

The next 2 helical transmembrane spans lie at threonine 7–glycine 27 and glutamine 29–serine 49. Histidine 131 contributes to the Zn(2+) binding site. Glutamate 132 is a catalytic residue. A Zn(2+)-binding site is contributed by histidine 135. The next 2 helical transmembrane spans lie at isoleucine 141–alanine 161 and isoleucine 177–isoleucine 197. Glutamate 202 is a Zn(2+) binding site.

It belongs to the peptidase M48B family. Requires Zn(2+) as cofactor.

The protein localises to the cell inner membrane. This Polynucleobacter necessarius subsp. necessarius (strain STIR1) protein is Protease HtpX homolog.